A 352-amino-acid chain; its full sequence is Deoxyhypusine synthase-like protein (352 aa).

This sequence belongs to the deoxyhypusine synthase family.

The protein is Deoxyhypusine synthase-like protein of Coxiella burnetii (strain Dugway 5J108-111).